A 383-amino-acid polypeptide reads, in one-letter code: DNA dC-&gt;dU-editing enzyme APOBEC-3G (383 aa).

The essential for cytoplasmic localization stretch occupies residues 1–60 (MKPHFRNTVERMYRGTFFYNFNNRPILSRRNTVWLCYEVKTRGPSMPTWGAKIFRGQLYP). CMP/dCMP-type deaminase domains follow at residues 29–138 (RRNT…LRIL) and 214–327 (GQRE…LRTL). A Phosphothreonine; by PKA modification is found at Thr-32. His-65, Cys-97, and Cys-100 together coordinate Zn(2+). Residues 209-335 (KPWVSGQRET…TLHRDGAKIA (127 aa)) are necessary for homooligomerization. The interval 213-215 (SGQ) is interaction with DNA. Phosphothreonine; by PKA and CAMK2 is present on Thr-218. His-257 is a binding site for Zn(2+). Residue Glu-259 is the Proton donor of the active site. Zn(2+) contacts are provided by Cys-287 and Cys-290. The interaction with DNA stretch occupies residues 312–319 (RIYDDQGR).

This sequence belongs to the cytidine and deoxycytidylate deaminase family. As to quaternary structure, homodimer. Homooligomer. Can bind RNA to form ribonucleoprotein complexes of high-molecular-mass (HMM) or low-molecular-mass (LMM). HMM is inactive and heterogeneous in protein composition because of binding nonselectively to cellular RNAs, which in turn are associated with variety of cellular proteins. The LMM form which is enzymatically active has few or no RNAs associated. Its ability to form homooligomer is distinct from its ability to assemble into HMM. Interacts with APOBEC3B, APOBEC3F, MOV10, AGO2, EIF4E, EIF4ENIF1, DCP2 and DDX6 in an RNA-dependent manner. Interacts with AGO1, AGO3 and PKA/PRKACA. Requires Zn(2+) as cofactor.

It localises to the cytoplasm. The protein localises to the nucleus. Its subcellular location is the P-body. It carries out the reaction a 2'-deoxycytidine in single-stranded DNA + H2O + H(+) = a 2'-deoxyuridine in single-stranded DNA + NH4(+). Its function is as follows. DNA deaminase (cytidine deaminase) which acts as an inhibitor of retrovirus replication and retrotransposon mobility. After the penetration of retroviral nucleocapsids into target cells of infection and the initiation of reverse transcription, it can induce the conversion of cytosine to uracil in the minus-sense single-strand viral DNA, leading to G-to-A hypermutations in the subsequent plus-strand viral DNA. The resultant detrimental levels of mutations in the proviral genome, along with a deamination-independent mechanism that works prior to the proviral integration, together exert efficient antiretroviral effects in infected target cells. Selectively targets single-stranded DNA and does not deaminate double-stranded DNA or single- or double-stranded RNA. This is DNA dC-&gt;dU-editing enzyme APOBEC-3G (APOBEC3G) from Erythrocebus patas (Red guenon).